A 131-amino-acid polypeptide reads, in one-letter code: Phosphoribosyl-AMP cyclohydrolase (131 aa).

D78 contacts Mg(2+). C79 serves as a coordination point for Zn(2+). Residues D80 and D82 each coordinate Mg(2+). Residues C96 and C103 each coordinate Zn(2+).

This sequence belongs to the PRA-CH family. As to quaternary structure, homodimer. Requires Mg(2+) as cofactor. Zn(2+) is required as a cofactor.

The protein localises to the cytoplasm. It carries out the reaction 1-(5-phospho-beta-D-ribosyl)-5'-AMP + H2O = 1-(5-phospho-beta-D-ribosyl)-5-[(5-phospho-beta-D-ribosylamino)methylideneamino]imidazole-4-carboxamide. It participates in amino-acid biosynthesis; L-histidine biosynthesis; L-histidine from 5-phospho-alpha-D-ribose 1-diphosphate: step 3/9. Functionally, catalyzes the hydrolysis of the adenine ring of phosphoribosyl-AMP. The sequence is that of Phosphoribosyl-AMP cyclohydrolase from Neisseria meningitidis serogroup A / serotype 4A (strain DSM 15465 / Z2491).